The following is a 333-amino-acid chain: Phosphate acetyltransferase (333 aa).

It belongs to the phosphate acetyltransferase and butyryltransferase family. In terms of assembly, homodimer.

It localises to the cell membrane. The catalysed reaction is acetyl-CoA + phosphate = acetyl phosphate + CoA. The protein operates within metabolic intermediate biosynthesis; acetyl-CoA biosynthesis; acetyl-CoA from acetate: step 2/2. The polypeptide is Phosphate acetyltransferase (pta) (Methanosarcina thermophila).